Consider the following 131-residue polypeptide: Superoxide dismutase [Ni] (131 aa).

Residues 1-14 (MLSRLFAPKVKVSA) constitute a propeptide that is removed on maturation. Residues His15, Cys16, and Cys20 each coordinate Ni(2+).

The protein belongs to the nickel superoxide dismutase family. As to quaternary structure, homohexamer. The hexameric protein has roughly the shape of a hollow sphere with an outer diameter of 72 Angstroms and a large inner cavity. Ni(2+) is required as a cofactor.

The protein resides in the cytoplasm. It carries out the reaction 2 superoxide + 2 H(+) = H2O2 + O2. In Streptomyces seoulensis, this protein is Superoxide dismutase [Ni] (sodN).